The chain runs to 150 residues: D-aminoacyl-tRNA deacylase (150 aa).

The Gly-cisPro motif, important for rejection of L-amino acids motif lies at 137–138 (GP).

The protein belongs to the DTD family. In terms of assembly, homodimer.

Its subcellular location is the cytoplasm. It catalyses the reaction glycyl-tRNA(Ala) + H2O = tRNA(Ala) + glycine + H(+). The enzyme catalyses a D-aminoacyl-tRNA + H2O = a tRNA + a D-alpha-amino acid + H(+). Functionally, an aminoacyl-tRNA editing enzyme that deacylates mischarged D-aminoacyl-tRNAs. Also deacylates mischarged glycyl-tRNA(Ala), protecting cells against glycine mischarging by AlaRS. Acts via tRNA-based rather than protein-based catalysis; rejects L-amino acids rather than detecting D-amino acids in the active site. By recycling D-aminoacyl-tRNA to D-amino acids and free tRNA molecules, this enzyme counteracts the toxicity associated with the formation of D-aminoacyl-tRNA entities in vivo and helps enforce protein L-homochirality. The chain is D-aminoacyl-tRNA deacylase from Heliobacterium modesticaldum (strain ATCC 51547 / Ice1).